A 558-amino-acid chain; its full sequence is Laccase-4 (558 aa).

An N-terminal signal peptide occupies residues 1 to 24 (MGSHMVWFLFLVSFFSVFPAPSES). Plastocyanin-like domains are found at residues 32–148 (NVVM…PKRG) and 158–308 (NEKV…YSGT). N-linked (GlcNAc...) asparagine glycosylation is found at asparagine 37 and asparagine 78. Cu cation is bound by residues histidine 82 and histidine 84. Residue asparagine 114 is glycosylated (N-linked (GlcNAc...) asparagine). Cu cation-binding residues include histidine 127 and histidine 129. N-linked (GlcNAc...) asparagine glycosylation is found at asparagine 187, asparagine 296, asparagine 323, asparagine 330, asparagine 373, asparagine 383, asparagine 400, asparagine 418, and asparagine 441. One can recognise a Plastocyanin-like 3 domain in the interval 408 to 542 (DFPKNPPHVF…KMAFLVENGK (135 aa)). Cu cation-binding residues include histidine 459, histidine 462, and histidine 464. The N-linked (GlcNAc...) asparagine glycan is linked to asparagine 479. Cu cation contacts are provided by histidine 521, cysteine 522, histidine 523, and histidine 527. A glycan (N-linked (GlcNAc...) asparagine) is linked at asparagine 545.

The protein belongs to the multicopper oxidase family. Requires Cu cation as cofactor. In terms of tissue distribution, ubiquitous, with higher levels in the inflorescence stem.

It localises to the secreted. The protein resides in the extracellular space. Its subcellular location is the apoplast. The enzyme catalyses 4 hydroquinone + O2 = 4 benzosemiquinone + 2 H2O. Its function is as follows. Lignin degradation and detoxification of lignin-derived products. Required for secondary xylem cell wall lignification. This chain is Laccase-4 (IRX12), found in Arabidopsis thaliana (Mouse-ear cress).